Reading from the N-terminus, the 294-residue chain is ATP phosphoribosyltransferase (294 aa).

Belongs to the ATP phosphoribosyltransferase family. Long subfamily. Mg(2+) serves as cofactor.

The protein localises to the cytoplasm. It catalyses the reaction 1-(5-phospho-beta-D-ribosyl)-ATP + diphosphate = 5-phospho-alpha-D-ribose 1-diphosphate + ATP. It functions in the pathway amino-acid biosynthesis; L-histidine biosynthesis; L-histidine from 5-phospho-alpha-D-ribose 1-diphosphate: step 1/9. With respect to regulation, feedback inhibited by histidine. Catalyzes the condensation of ATP and 5-phosphoribose 1-diphosphate to form N'-(5'-phosphoribosyl)-ATP (PR-ATP). Has a crucial role in the pathway because the rate of histidine biosynthesis seems to be controlled primarily by regulation of HisG enzymatic activity. The sequence is that of ATP phosphoribosyltransferase from Prosthecochloris aestuarii (strain DSM 271 / SK 413).